Consider the following 521-residue polypeptide: BAR/IMD domain-containing adapter protein 2 (521 aa).

The IMD domain maps to 1-250 (MSLSRSEEMH…VQLMQQMGNS (250 aa)). A coiled-coil region spans residues 132–153 (DALDKCQAELKKLRKKSQGSKN). 4 positions are modified to phosphoserine: Ser262, Ser324, Ser326, and Ser337. Positions 297-370 (APVMNGVSGP…TLPRSSSMAA (74 aa)) are disordered. A compositionally biased stretch (low complexity) spans 321-333 (QPKSTSPPQSQSK). Phosphothreonine is present on Thr341. Ser347 carries the post-translational modification Phosphoserine. A compositionally biased stretch (polar residues) spans 353–368 (SYATTENKTLPRSSSM). Thr361 is modified (phosphothreonine). 4 positions are modified to phosphoserine: Ser367, Ser385, Ser396, and Ser455. An SH3 domain is found at 375-438 (NGRMRVKAIF…PFSYTRVLDN (64 aa)). Residues 450–471 (QGKSSSTGNLLDKEDLALPPPD) form a disordered region.

As to quaternary structure, homodimer. Interacts with CDC42 and RAC1 that have been activated by GTP binding. Interacts with ATN1, ADGRB1, DIAPH1, EPS8, SHANK1, SHANK2, SHANK3, TIAM1, WASF1 and WASF2. Interacts with ENAH after recruitment of CDC42. Phosphorylated on tyrosine residues by INSR in response to insulin treatment.

The protein localises to the cytoplasm. Its subcellular location is the membrane. The protein resides in the cell projection. It localises to the filopodium. It is found in the ruffle. The protein localises to the cytoskeleton. Adapter protein that links membrane-bound small G-proteins to cytoplasmic effector proteins. Necessary for CDC42-mediated reorganization of the actin cytoskeleton and for RAC1-mediated membrane ruffling. Involved in the regulation of the actin cytoskeleton by WASF family members and the Arp2/3 complex. Plays a role in neurite growth. Acts syngeristically with ENAH to promote filipodia formation. Plays a role in the reorganization of the actin cytoskeleton in response to bacterial infection. Participates in actin bundling when associated with EPS8, promoting filopodial protrusions. This chain is BAR/IMD domain-containing adapter protein 2 (BAIAP2), found in Bos taurus (Bovine).